The following is a 513-amino-acid chain: Cytochrome P450 72A552 (513 aa).

A helical membrane pass occupies residues 2–22; it reads EISVASVTVSVVIAVVTWWVW. Position 460 (Cys-460) interacts with heme.

This sequence belongs to the cytochrome P450 family. The cofactor is heme.

It is found in the membrane. The catalysed reaction is oleanolate + reduced [NADPH--hemoprotein reductase] + O2 = hederagenin + oxidized [NADPH--hemoprotein reductase] + H2O + H(+). Catalyzes the oxidation of oleanolate at the C-23 position to form hederagenin. The protein is Cytochrome P450 72A552 of Barbarea vulgaris (Yellow rocket).